The chain runs to 1846 residues: Peripheral-type benzodiazepine receptor-associated protein 1 (1846 aa).

3 disordered regions span residues 57–97, 281–318, and 560–628; these read EESS…GYSC, NQREPLRPARSPGPTAPSRVGAPAPGAPGEAVLQDDVE, and GPKD…SEVE. The span at 576 to 587 shows a compositional bias: polar residues; sequence PKSSEPALTTLT. Low complexity predominate over residues 599-612; the sequence is SLSNSSRSESIHNS. The SH3 1 domain occupies 649–716; the sequence is ARIQVFLARY…PSNFVERVSD (68 aa). The tract at residues 726 to 785 is disordered; that stretch reads ELADSSHSSGPELSFLSGGGGGCSSGGQSSGGRSQPRPEEEAAGDELSLSPPPEGLGEPL. Positions 742-755 are enriched in gly residues; it reads SGGGGGCSSGGQSS. Fibronectin type-III domains are found at residues 787 to 878, 880 to 972, and 977 to 1075; these read VPYP…AGAG, VPSQ…TLPA, and APLD…PALA. Disordered stretches follow at residues 1084–1107, 1163–1219, 1243–1302, 1322–1476, 1492–1617, 1704–1755, and 1812–1846; these read SCLSPRPSPEVRTPLASVSPGLGD, EPTL…LDSG, HSRN…SDEE, SIPE…PESS, YDSE…QDLP, LTEA…AAQK, and VPSNFLEGPGPESGSLESGTSQAESQRTRRRRVQC. Basic and acidic residues predominate over residues 1202 to 1219; the sequence is TQKKPSIEACHGGDLDSG. Over residues 1251–1265 the composition is skewed to acidic residues; the sequence is DIQEEEEEEEEEEEE. Over residues 1270–1283 the composition is skewed to polar residues; that stretch reads PCSSQKQVAGNSIR. Residues 1324–1335 show a composition bias toward acidic residues; that stretch reads PEEEEEEEEEEG. Composition is skewed to basic and acidic residues over residues 1411-1420 and 1545-1577; these read RPQDPREHCS and AWEKGEPERRGRSAIGRTKEPPSRATETGESRG. In terms of domain architecture, SH3 2 spans 1616-1684; it reads LPVRVFVALF…PCNMVAEVAV (69 aa). A compositionally biased stretch (polar residues) spans 1705 to 1719; it reads TEASGNGPSVYSSAH. The SH3 3 domain maps to 1755–1822; sequence KTSRPMVAAF…PSNFLEGPGP (68 aa). Low complexity predominate over residues 1817–1830; that stretch reads LEGPGPESGSLESG.

This sequence belongs to the RIMBP family. Interacts with RIMS1 and RIMS2. Interacts with TSPO. Interacts with CACNA1A. As to expression, predominantly expressed in the brain.

It is found in the cytoplasm. The protein localises to the mitochondrion. Functionally, required for synaptic transmission regulation. It probably controls the recruitement of voltage-gated calcium channels to the presynaptic membrane, and modulates neurotransmitter release. In Mus musculus (Mouse), this protein is Peripheral-type benzodiazepine receptor-associated protein 1.